We begin with the raw amino-acid sequence, 388 residues long: Chaperone protein DnaJ (388 aa).

Residues 5–69 (DYYDVLGVDK…QKRAQYDQFG (65 aa)) enclose the J domain. The segment at 145–227 (GKKTDITYTR…CHGQGTVDKK (83 aa)) adopts a CR-type zinc-finger fold. Residues C158, C161, C175, C178, C201, C204, C215, and C218 each contribute to the Zn(2+) site. CXXCXGXG motif repeat units lie at residues 158–165 (CPTCDGSG), 175–182 (CDKCHGSG), 201–208 (CDKCGGRG), and 215–222 (CQTCHGQG).

The protein belongs to the DnaJ family. Homodimer. The cofactor is Zn(2+).

Its subcellular location is the cytoplasm. Participates actively in the response to hyperosmotic and heat shock by preventing the aggregation of stress-denatured proteins and by disaggregating proteins, also in an autonomous, DnaK-independent fashion. Unfolded proteins bind initially to DnaJ; upon interaction with the DnaJ-bound protein, DnaK hydrolyzes its bound ATP, resulting in the formation of a stable complex. GrpE releases ADP from DnaK; ATP binding to DnaK triggers the release of the substrate protein, thus completing the reaction cycle. Several rounds of ATP-dependent interactions between DnaJ, DnaK and GrpE are required for fully efficient folding. Also involved, together with DnaK and GrpE, in the DNA replication of plasmids through activation of initiation proteins. This chain is Chaperone protein DnaJ, found in Lactobacillus johnsonii (strain CNCM I-12250 / La1 / NCC 533).